The sequence spans 505 residues: MEEFQGYLELYRSQQHDFLYPLIFREYIYALAHDRGLNRSVLLDNVGYDKKSSLLIIKRLISRMYHQNHFIISVNDSNQNKFLGYNKNLYSQMISEGFAVIVEIPFSLRLVSSLEETEIVKSYNLRSIHSIFPFLEDKFPHLNYASDVLIPYPIHLEILVQTLRYYVKDPSSLHLLRLFLHEYYNWNTLITITPKKSIFAKSNQRLFLLLYNSYVCEYESILLFLRNQSNHLRLTSSGILFERIRFYEKIKYPVEEVFANDFPATLWFFKDPFIQYVRYQGKSILASKDTPLLMNKWKYYLVHFWQCHFYVWSQPGRIHRNQLSKHSFDFLGYLSSIRPNISVVRSQLLENSFLMDNAMKKLDTLFPIIPMIGSLAKVKFCNTSGHPISKSSWADSSDSDIIDRFVRIGGNLSHYYSGSSKKKSLYRIKYILRLSCVKTLARKHKSTVRTFLKRLGPKLLDEFFTEEEQIFSLLFPRTSSTLKRFYRGRIWYLDILCINDLVNHE.

Belongs to the intron maturase 2 family. MatK subfamily.

It localises to the plastid. It is found in the chloroplast. In terms of biological role, usually encoded in the trnK tRNA gene intron. Probably assists in splicing its own and other chloroplast group II introns. This is Maturase K from Rosa stellata (Star rose).